A 447-amino-acid chain; its full sequence is Probable glycine dehydrogenase (decarboxylating) subunit 1 (447 aa).

It belongs to the GcvP family. N-terminal subunit subfamily. In terms of assembly, the glycine cleavage system is composed of four proteins: P, T, L and H. In this organism, the P 'protein' is a heterodimer of two subunits.

It carries out the reaction N(6)-[(R)-lipoyl]-L-lysyl-[glycine-cleavage complex H protein] + glycine + H(+) = N(6)-[(R)-S(8)-aminomethyldihydrolipoyl]-L-lysyl-[glycine-cleavage complex H protein] + CO2. Functionally, the glycine cleavage system catalyzes the degradation of glycine. The P protein binds the alpha-amino group of glycine through its pyridoxal phosphate cofactor; CO(2) is released and the remaining methylamine moiety is then transferred to the lipoamide cofactor of the H protein. The chain is Probable glycine dehydrogenase (decarboxylating) subunit 1 from Bacillus cereus (strain ATCC 10987 / NRS 248).